Reading from the N-terminus, the 316-residue chain is Transaldolase A (316 aa).

Catalysis depends on Lys-131, which acts as the Schiff-base intermediate with substrate.

This sequence belongs to the transaldolase family. Type 1 subfamily. Homodimer.

It localises to the cytoplasm. The enzyme catalyses D-sedoheptulose 7-phosphate + D-glyceraldehyde 3-phosphate = D-erythrose 4-phosphate + beta-D-fructose 6-phosphate. The protein operates within carbohydrate degradation; pentose phosphate pathway; D-glyceraldehyde 3-phosphate and beta-D-fructose 6-phosphate from D-ribose 5-phosphate and D-xylulose 5-phosphate (non-oxidative stage): step 2/3. Functionally, transaldolase is important for the balance of metabolites in the pentose-phosphate pathway. The chain is Transaldolase A (talA) from Escherichia coli O157:H7.